We begin with the raw amino-acid sequence, 298 residues long: HTH-type transcriptional regulator ArgP (298 aa).

One can recognise an HTH lysR-type domain in the interval 4 to 60 (LDYKWIEALDAVVAQGGFERAAEELYISQSAVSQRIKQLERFLAQPVLIREQPPKPT). A DNA-binding region (H-T-H motif) is located at residues 21-40 (FERAAEELYISQSAVSQRIK).

Belongs to the LysR transcriptional regulatory family. Homodimer.

Functionally, controls the transcription of genes involved in arginine and lysine metabolism. The sequence is that of HTH-type transcriptional regulator ArgP from Vibrio vulnificus (strain CMCP6).